Here is a 158-residue protein sequence, read N- to C-terminus: UPF0225 protein Pput_1155 (158 aa).

The protein belongs to the UPF0225 family.

The chain is UPF0225 protein Pput_1155 from Pseudomonas putida (strain ATCC 700007 / DSM 6899 / JCM 31910 / BCRC 17059 / LMG 24140 / F1).